Consider the following 2240-residue polypeptide: Cadherin-89D (2240 aa).

Cadherin domains follow at residues 70 to 179 (SEGV…APEF), 180 to 295 (LNVP…PPKF), 296 to 411 (TEGV…VPEF), 412 to 528 (EADY…TPKF), and 529 to 643 (EHGN…APYE). 19 N-linked (GlcNAc...) asparagine glycosylation sites follow: Asn-114, Asn-119, Asn-191, Asn-278, Asn-334, Asn-417, Asn-585, Asn-720, Asn-752, Asn-822, Asn-833, Asn-983, Asn-989, Asn-1006, Asn-1255, Asn-1318, Asn-1486, Asn-1529, and Asn-1556. The segment at 814–844 (MPSEPTSRNITMGSRFRSRNRSRSSKSKRRL) is disordered. Cadherin domains lie at 824 to 927 (TMGS…APKF), 928 to 1087 (NALT…APMF), 1171 to 1284 (TTKC…APTF), 1285 to 1389 (KKSW…RPEF), and 1411 to 1520 (MLPV…PPKS). The segment covering 829–844 (FRSRNRSRSSKSKRRL) has biased composition (basic residues). 2 consecutive Cadherin domains span residues 1534–1660 (QHAY…APKF) and 1661–1774 (RGNG…MPVE). Residues 1884 to 1904 (FVTVVLLALISLGALIAACCY) traverse the membrane as a helical segment. The Cytoplasmic portion of the chain corresponds to 1905–2240 (VCMRQKRRLW…LEFSKSNSLF (336 aa)). Disordered regions lie at residues 1930–1972 (IAGI…PESV) and 2121–2140 (AHLE…EDSL). The span at 1939-1952 (QKQRRQRQQRHTQR) shows a compositional bias: basic residues. Residues 1953–1964 (CSKGSTGSQRPT) are compositionally biased toward polar residues.

It is found in the cell membrane. Cadherins are calcium-dependent cell adhesion proteins. They preferentially interact with themselves in a homophilic manner in connecting cells. The sequence is that of Cadherin-89D (Cad89D) from Drosophila melanogaster (Fruit fly).